Reading from the N-terminus, the 442-residue chain is Interferon-related developmental regulator 2 (442 aa).

The span at 1-15 (MPRARKGNTLRKGGQ) shows a compositional bias: basic residues. Positions 1–71 (MPRARKGNTL…DVVDEQGQQE (71 aa)) are disordered. Residues 43 to 56 (TASECPSLLSTTAE) show a composition bias toward polar residues.

It belongs to the IFRD family. In terms of assembly, associates with ribosomes; promoting ribosome inactivation. In terms of tissue distribution, expressed in many tissues including heart, brain, placenta, lung, liver, skeletal muscle, kidney and pancreas.

Functionally, ribosome-binding protein that acts as an inhibitor of mRNA translation by promoting ribosome inactivation. Associates with the P- and E-sites of the ribosome and inserts a C-terminal helix into the mRNA exit channel to preclude translation. This is Interferon-related developmental regulator 2 from Homo sapiens (Human).